A 195-amino-acid polypeptide reads, in one-letter code: Pyruvoyl-dependent arginine decarboxylase AaxB (195 aa).

Ser-53 is subject to Pyruvic acid (Ser).

It belongs to the pyruvoyl-dependent arginine decarboxylase family. As to quaternary structure, trimer of an alpha-beta dimer. The cofactor is pyruvate.

Its subcellular location is the cytoplasm. The catalysed reaction is L-arginine + H(+) = agmatine + CO2. Part of the AaxABC system, catalyzes the decarboxylation of L-arginine. The arginine uptake by the bacterium in the macrophage may be a virulence factor against the host innate immune response. The protein is Pyruvoyl-dependent arginine decarboxylase AaxB (aaxB) of Chlamydia caviae (strain ATCC VR-813 / DSM 19441 / 03DC25 / GPIC) (Chlamydophila caviae).